A 220-amino-acid chain; its full sequence is Iron-sulfur cluster repair protein YtfE (220 aa).

The protein belongs to the RIC family. YtfE subfamily. As to quaternary structure, homodimer.

The protein localises to the cytoplasm. Di-iron-containing protein involved in the repair of iron-sulfur clusters damaged by oxidative and nitrosative stress conditions. This Salmonella choleraesuis (strain SC-B67) protein is Iron-sulfur cluster repair protein YtfE.